The chain runs to 411 residues: Dihydrosphingosine 1-phosphate phosphatase C823.11 (411 aa).

At 1 to 74 (MVHKKKNVDI…LDVYFMYTAT (74 aa)) the chain is on the lumenal side. The helical transmembrane segment at 75-95 (LGTHVFFMLALPIFFWSGCIY) threads the bilayer. Over 96–99 (YTLD) the chain is Cytoplasmic. A helical transmembrane segment spans residues 100 to 120 (ITQLFAAGVYFSGCIKDYFCL). The phosphatase sequence motif I stretch occupies residues 115–123 (KDYFCLPRP). Residues 121-170 (PRPRSPPMVRLTLSSDAEYEYGFPSTHTTNAMATGFYSLFLLLSMSDSMS) lie on the Lumenal side of the membrane. The phosphatase sequence motif II stretch occupies residues 144–147 (PSTH). The active-site Proton donor is the His-147. A helical transmembrane segment spans residues 171–191 (SISYYFLLSLVLLYIASISLG). Residues 191-202 (GRIYCGMHGFMD) are phosphatase sequence motif III. Over 192-195 (RIYC) the chain is Cytoplasmic. The chain crosses the membrane as a helical span at residues 196–216 (GMHGFMDVSTGTILGVTLAIF). Residue His-198 is the Nucleophile of the active site. Topologically, residues 217 to 233 (QWKYADFFHNVWSSSST) are lumenal. Residues 234-254 (SVPILSVVLALFFIWFHPQPA) form a helical membrane-spanning segment. Topologically, residues 255-259 (ERCIC) are cytoplasmic. Residues 260–280 (LEDSISFISVIMGIDLGTWFA) traverse the membrane as a helical segment. At 281–293 (SPESLSHLHDNLN) the chain is on the lumenal side. Residues 294–314 (SYFLLKFFVRVLFGVCMILIW) traverse the membrane as a helical segment. Over 315-387 (KSFAKQALLA…VRFDIETIAR (73 aa)) the chain is Cytoplasmic. The helical transmembrane segment at 388 to 408 (IIVYSGIGFLCTYFAPKVFLK) threads the bilayer. Residues 409 to 411 (WKI) are Lumenal-facing.

Belongs to the type 2 lipid phosphate phosphatase family.

The protein resides in the endoplasmic reticulum membrane. Functionally, dihydrosphingosine 1-phosphate phosphatase required for efficient ceramide synthesis from exogenous sphingoid bases. Involved in endocytosis and calcium-mediated signaling. The protein is Dihydrosphingosine 1-phosphate phosphatase C823.11 of Schizosaccharomyces pombe (strain 972 / ATCC 24843) (Fission yeast).